Here is a 261-residue protein sequence, read N- to C-terminus: Cytochrome c oxidase subunit 3 (261 aa).

Residues 1–15 (MTHQTHAYHMVNPSP) lie on the Mitochondrial matrix side of the membrane. The chain crosses the membrane as a helical span at residues 16–34 (WPLTGALSALLMTSGLIMW). The Mitochondrial intermembrane segment spans residues 35 to 40 (FHFNST). The helical transmembrane segment at 41–66 (TLLMLGLTTNMLTMYQWWRDIIREST) threads the bilayer. Over 67–72 (FQGHHT) the chain is Mitochondrial matrix. A helical transmembrane segment spans residues 73-105 (PNVQKGLRYGMILFIISEVLFFTGFFWAFYHSS). The Mitochondrial intermembrane segment spans residues 106-128 (LAPTPELGGCWPPTGIHPLNPLE). Residues 129 to 152 (VPLLNTSVLLASGVSITWAHHSLM) form a helical membrane-spanning segment. At 153-155 (EGN) the chain is on the mitochondrial matrix side. A helical membrane pass occupies residues 156 to 183 (RNHMLQALFITIALGVYFTLLQASEYYE). The Mitochondrial intermembrane portion of the chain corresponds to 184–190 (APFTISD). A helical membrane pass occupies residues 191 to 223 (GVYGSTFFVATGFHGLHVIIGSTFLIVCFFRQL). The Mitochondrial matrix portion of the chain corresponds to 224-232 (KFHFTSSHH). The chain crosses the membrane as a helical span at residues 233–256 (FGFEAAAWYWHFVDVVWLFLYVSI). Residues 257–261 (YWWGS) lie on the Mitochondrial intermembrane side of the membrane.

The protein belongs to the cytochrome c oxidase subunit 3 family. In terms of assembly, component of the cytochrome c oxidase (complex IV, CIV), a multisubunit enzyme composed of 14 subunits. The complex is composed of a catalytic core of 3 subunits MT-CO1, MT-CO2 and MT-CO3, encoded in the mitochondrial DNA, and 11 supernumerary subunits COX4I, COX5A, COX5B, COX6A, COX6B, COX6C, COX7A, COX7B, COX7C, COX8 and NDUFA4, which are encoded in the nuclear genome. The complex exists as a monomer or a dimer and forms supercomplexes (SCs) in the inner mitochondrial membrane with NADH-ubiquinone oxidoreductase (complex I, CI) and ubiquinol-cytochrome c oxidoreductase (cytochrome b-c1 complex, complex III, CIII), resulting in different assemblies (supercomplex SCI(1)III(2)IV(1) and megacomplex MCI(2)III(2)IV(2)).

It localises to the mitochondrion inner membrane. The enzyme catalyses 4 Fe(II)-[cytochrome c] + O2 + 8 H(+)(in) = 4 Fe(III)-[cytochrome c] + 2 H2O + 4 H(+)(out). Functionally, component of the cytochrome c oxidase, the last enzyme in the mitochondrial electron transport chain which drives oxidative phosphorylation. The respiratory chain contains 3 multisubunit complexes succinate dehydrogenase (complex II, CII), ubiquinol-cytochrome c oxidoreductase (cytochrome b-c1 complex, complex III, CIII) and cytochrome c oxidase (complex IV, CIV), that cooperate to transfer electrons derived from NADH and succinate to molecular oxygen, creating an electrochemical gradient over the inner membrane that drives transmembrane transport and the ATP synthase. Cytochrome c oxidase is the component of the respiratory chain that catalyzes the reduction of oxygen to water. Electrons originating from reduced cytochrome c in the intermembrane space (IMS) are transferred via the dinuclear copper A center (CU(A)) of subunit 2 and heme A of subunit 1 to the active site in subunit 1, a binuclear center (BNC) formed by heme A3 and copper B (CU(B)). The BNC reduces molecular oxygen to 2 water molecules using 4 electrons from cytochrome c in the IMS and 4 protons from the mitochondrial matrix. The polypeptide is Cytochrome c oxidase subunit 3 (MT-CO3) (Litocranius walleri (Gerenuk)).